The sequence spans 387 residues: Thermostable celloxylanase (387 aa).

The 342-residue stretch at 41-382 folds into the GH10 domain; that stretch reads AEDIPSLAEA…KPAFWAIVDP (342 aa). Catalysis depends on glutamate 185, which acts as the Proton donor. Glutamate 293 acts as the Nucleophile in catalysis.

This sequence belongs to the glycosyl hydrolase 10 (cellulase F) family.

The catalysed reaction is Endohydrolysis of (1-&gt;4)-beta-D-glucosidic linkages in cellulose, lichenin and cereal beta-D-glucans.. The enzyme catalyses Endohydrolysis of (1-&gt;4)-beta-D-xylosidic linkages in xylans.. It functions in the pathway glycan degradation; xylan degradation. Active toward xylan, carboxymethylcellulose, P-nitrophenyl-beta-D-xylopyranoside and P-nitrophenyl-beta-D-cellobioside. This Thermoclostridium stercorarium (Clostridium stercorarium) protein is Thermostable celloxylanase (xynB).